A 370-amino-acid chain; its full sequence is Transcription factor E2F2 (370 aa).

The disordered stretch occupies residues 1 to 73 (MYKRKTASIV…QSQSQPGQQR (73 aa)). The segment covering 15-26 (SAAGTTSSAMMM) has biased composition (low complexity). Positions 31–49 (AETSVRSQSYESTPVSMDT) are enriched in polar residues. The segment covering 59 to 73 (SPSNSQSQSQPGQQR) has biased composition (low complexity). The DNA-binding element occupies 72–137 (QRSVGSLVLL…GRHCSLVRWR (66 aa)). Positions 137-226 (RGGGFNNAKD…VDIKRNHYEL (90 aa)) are dimerization.

It belongs to the E2F/DP family. In terms of assembly, forms a heterodimer with Dp. Interacts with Rbf/Rbf1 and Rbf2. Component of the DREAM complex, which is at least composed of Myb, Caf1-55, mip40, mip120, mip130, E2f2, Dp, Rbf, Rbf2, lin-52, HDAC1/Rpd3 and l(3)mbt. Ubiquitously expressed in eye disk.

It localises to the nucleus. Its function is as follows. Transcriptional repressor that binds to E2f sites and represses E2f-regulated target genes. Binding to E2f sites requires transcription factor Dp. Acts synergistically with Rbf2 to antagonize E2f1-mediated transcriptional activation. Component of the DREAM complex, a multiprotein complex that can both act as a transcription activator or repressor depending on the context. The DREAM complex is required for recruiting E2f2 at differentiation-specific promoters and for stabilizing E2f2-Rbf complexes during S phase. During development, the complex represses transcription of developmentally controlled E2f target genes. During oogenesis, plays a role in restricting DNA synthesis to sites of chorion gene amplification in late stage ovarian follicle cells. Plays an inhibitory role in ionizing radiation (IR)-induced p53-independent apoptosis. May be involved in cell cycle exit by temporarily limiting CycE-dependent activation of E2f-regulated transcription. This chain is Transcription factor E2F2 (E2f2), found in Drosophila melanogaster (Fruit fly).